Here is a 132-residue protein sequence, read N- to C-terminus: L-ectoine synthase (132 aa).

It belongs to the ectoine synthase family.

The enzyme catalyses (2S)-4-acetamido-2-aminobutanoate = L-ectoine + H2O. The protein operates within amine and polyamine biosynthesis; ectoine biosynthesis; L-ectoine from L-aspartate 4-semialdehyde: step 3/3. Its function is as follows. Catalyzes the circularization of gamma-N-acetyl-alpha,gamma-diaminobutyric acid (ADABA) to ectoine (1,4,5,6-tetrahydro-2-methyl-4-pyrimidine carboxylic acid), which is an excellent osmoprotectant. The chain is L-ectoine synthase from Rhodococcus jostii (strain RHA1).